The sequence spans 343 residues: Dihydroorotase (343 aa).

Residues histidine 14 and histidine 16 each coordinate Zn(2+). Substrate is bound by residues 16–18 (HLR) and asparagine 42. 3 residues coordinate Zn(2+): lysine 100, histidine 137, and histidine 175. At lysine 100 the chain carries N6-carboxylysine. Histidine 137 contacts substrate. Substrate is bound at residue leucine 220. A Zn(2+)-binding site is contributed by aspartate 248. Aspartate 248 is an active-site residue. The substrate site is built by histidine 252 and alanine 264.

Belongs to the metallo-dependent hydrolases superfamily. DHOase family. Class II DHOase subfamily. As to quaternary structure, homodimer. It depends on Zn(2+) as a cofactor.

It catalyses the reaction (S)-dihydroorotate + H2O = N-carbamoyl-L-aspartate + H(+). It functions in the pathway pyrimidine metabolism; UMP biosynthesis via de novo pathway; (S)-dihydroorotate from bicarbonate: step 3/3. Its function is as follows. Catalyzes the reversible cyclization of carbamoyl aspartate to dihydroorotate. This is Dihydroorotase from Parasynechococcus marenigrum (strain WH8102).